A 298-amino-acid polypeptide reads, in one-letter code: Protoheme IX farnesyltransferase (298 aa).

Helical transmembrane passes span 29–49, 51–71, 97–117, 120–140, 148–168, 175–195, 221–241, 243–263, and 278–298; these read LIVF…PPLL, FGVA…LNCL, ETVT…HGFI, LTMW…TLIL, IVIG…AMTG, LVLF…LACY, ILWY…LGMS, GFYL…AIAL, and YSIL…LIVL.

It belongs to the UbiA prenyltransferase family. Protoheme IX farnesyltransferase subfamily.

The protein localises to the cell inner membrane. The catalysed reaction is heme b + (2E,6E)-farnesyl diphosphate + H2O = Fe(II)-heme o + diphosphate. The protein operates within porphyrin-containing compound metabolism; heme O biosynthesis; heme O from protoheme: step 1/1. In terms of biological role, converts heme B (protoheme IX) to heme O by substitution of the vinyl group on carbon 2 of heme B porphyrin ring with a hydroxyethyl farnesyl side group. This Dechloromonas aromatica (strain RCB) protein is Protoheme IX farnesyltransferase.